The following is a 1017-amino-acid chain: A-type ATP synthase subunit A (1017 aa).

The DOD-type homing endonuclease domain maps to 396–529 (FLGYLIADGT…FSYLLAKLGI (134 aa)).

This sequence belongs to the ATPase alpha/beta chains family. In terms of assembly, has multiple subunits with at least A(3), B(3), C, D, E, F, H, I and proteolipid K(x). In terms of processing, this protein undergoes a protein self splicing that involves a post-translational excision of the VDE intervening region (intein) followed by peptide ligation.

The protein localises to the cell membrane. The enzyme catalyses ATP + H2O + 4 H(+)(in) = ADP + phosphate + 5 H(+)(out). Component of the A-type ATP synthase that produces ATP from ADP in the presence of a proton gradient across the membrane. The A chain is the catalytic subunit. This Pyrococcus abyssi (strain GE5 / Orsay) protein is A-type ATP synthase subunit A.